The chain runs to 204 residues: ATP-dependent Clp protease proteolytic subunit (204 aa).

Ser101 functions as the Nucleophile in the catalytic mechanism. The active site involves His126.

The protein belongs to the peptidase S14 family. Component of the chloroplastic Clp protease core complex.

The protein localises to the plastid. The protein resides in the chloroplast stroma. The catalysed reaction is Hydrolysis of proteins to small peptides in the presence of ATP and magnesium. alpha-casein is the usual test substrate. In the absence of ATP, only oligopeptides shorter than five residues are hydrolyzed (such as succinyl-Leu-Tyr-|-NHMec, and Leu-Tyr-Leu-|-Tyr-Trp, in which cleavage of the -Tyr-|-Leu- and -Tyr-|-Trp bonds also occurs).. Its function is as follows. Cleaves peptides in various proteins in a process that requires ATP hydrolysis. Has a chymotrypsin-like activity. Plays a major role in the degradation of misfolded proteins. The chain is ATP-dependent Clp protease proteolytic subunit from Anthoceros angustus (Hornwort).